We begin with the raw amino-acid sequence, 286 residues long: Phosphate import ATP-binding protein PstB (286 aa).

A disordered region spans residues 1-27 (MEPKETLRQRWPGRGRTEETGAMKKSD). The span at 15–27 (GRTEETGAMKKSD) shows a compositional bias: basic and acidic residues. The ABC transporter domain occupies 33 to 281 (MTVEHLNMYY…PDRKETEDYV (249 aa)). 65–72 (GPSGCGKS) is a binding site for ATP.

It belongs to the ABC transporter superfamily. Phosphate importer (TC 3.A.1.7) family. The complex is composed of two ATP-binding proteins (PstB), two transmembrane proteins (PstC and PstA) and a solute-binding protein (PstS).

It localises to the cell membrane. It catalyses the reaction phosphate(out) + ATP + H2O = ADP + 2 phosphate(in) + H(+). Functionally, part of the ABC transporter complex PstSACB involved in phosphate import. Responsible for energy coupling to the transport system. The chain is Phosphate import ATP-binding protein PstB from Rubrobacter xylanophilus (strain DSM 9941 / JCM 11954 / NBRC 16129 / PRD-1).